A 420-amino-acid polypeptide reads, in one-letter code: Serine hydroxymethyltransferase (420 aa).

(6S)-5,6,7,8-tetrahydrofolate contacts are provided by residues Leu121 and 125-127 (GHL). Lys230 carries the N6-(pyridoxal phosphate)lysine modification. Residues Glu246 and 354–356 (SPF) each bind (6S)-5,6,7,8-tetrahydrofolate.

The protein belongs to the SHMT family. As to quaternary structure, homodimer. It depends on pyridoxal 5'-phosphate as a cofactor.

It is found in the cytoplasm. The enzyme catalyses (6R)-5,10-methylene-5,6,7,8-tetrahydrofolate + glycine + H2O = (6S)-5,6,7,8-tetrahydrofolate + L-serine. It functions in the pathway one-carbon metabolism; tetrahydrofolate interconversion. The protein operates within amino-acid biosynthesis; glycine biosynthesis; glycine from L-serine: step 1/1. Catalyzes the reversible interconversion of serine and glycine with tetrahydrofolate (THF) serving as the one-carbon carrier. This reaction serves as the major source of one-carbon groups required for the biosynthesis of purines, thymidylate, methionine, and other important biomolecules. Also exhibits THF-independent aldolase activity toward beta-hydroxyamino acids, producing glycine and aldehydes, via a retro-aldol mechanism. This Rickettsia akari (strain Hartford) protein is Serine hydroxymethyltransferase.